The sequence spans 182 residues: ATP synthase subunit delta (182 aa).

This sequence belongs to the ATPase delta chain family. F-type ATPases have 2 components, F(1) - the catalytic core - and F(0) - the membrane proton channel. F(1) has five subunits: alpha(3), beta(3), gamma(1), delta(1), epsilon(1). F(0) has three main subunits: a(1), b(2) and c(10-14). The alpha and beta chains form an alternating ring which encloses part of the gamma chain. F(1) is attached to F(0) by a central stalk formed by the gamma and epsilon chains, while a peripheral stalk is formed by the delta and b chains.

The protein localises to the cell inner membrane. Functionally, f(1)F(0) ATP synthase produces ATP from ADP in the presence of a proton or sodium gradient. F-type ATPases consist of two structural domains, F(1) containing the extramembraneous catalytic core and F(0) containing the membrane proton channel, linked together by a central stalk and a peripheral stalk. During catalysis, ATP synthesis in the catalytic domain of F(1) is coupled via a rotary mechanism of the central stalk subunits to proton translocation. Its function is as follows. This protein is part of the stalk that links CF(0) to CF(1). It either transmits conformational changes from CF(0) to CF(1) or is implicated in proton conduction. This is ATP synthase subunit delta from Persephonella marina (strain DSM 14350 / EX-H1).